A 259-amino-acid polypeptide reads, in one-letter code: Imidazole glycerol phosphate synthase subunit HisF (259 aa).

Active-site residues include Asp-11 and Asp-130.

The protein belongs to the HisA/HisF family. In terms of assembly, heterodimer of HisH and HisF.

The protein localises to the cytoplasm. The catalysed reaction is 5-[(5-phospho-1-deoxy-D-ribulos-1-ylimino)methylamino]-1-(5-phospho-beta-D-ribosyl)imidazole-4-carboxamide + L-glutamine = D-erythro-1-(imidazol-4-yl)glycerol 3-phosphate + 5-amino-1-(5-phospho-beta-D-ribosyl)imidazole-4-carboxamide + L-glutamate + H(+). Its pathway is amino-acid biosynthesis; L-histidine biosynthesis; L-histidine from 5-phospho-alpha-D-ribose 1-diphosphate: step 5/9. Its function is as follows. IGPS catalyzes the conversion of PRFAR and glutamine to IGP, AICAR and glutamate. The HisF subunit catalyzes the cyclization activity that produces IGP and AICAR from PRFAR using the ammonia provided by the HisH subunit. In Syntrophobacter fumaroxidans (strain DSM 10017 / MPOB), this protein is Imidazole glycerol phosphate synthase subunit HisF.